Reading from the N-terminus, the 119-residue chain is MRHRKSGVKLGRTGSHRKAMFQNMTNSLFEHELIKTTLPKAKELRRVAEPLITMAKEDSVANRRLAFSRMRSKAMVGKLFGTLGPRYQARPGGYLRIVKCGYRDGDNAPMAYVELVDRD.

The protein belongs to the bacterial ribosomal protein bL17 family. In terms of assembly, part of the 50S ribosomal subunit. Contacts protein L32.

In Psychrobacter arcticus (strain DSM 17307 / VKM B-2377 / 273-4), this protein is Large ribosomal subunit protein bL17.